A 92-amino-acid chain; its full sequence is MNDHTPDRYVTFLGIDCDAKADRMMEMLSARLASTDSPWVRYFEQKLAEKARMATDNLHFVGSQINSLYSFFEEAEDEEGLDLLWHLEHNCC.

This sequence belongs to the CowN family.

Functionally, is required to sustain N(2)-dependent growth in the presence of low levels of carbon monoxide (CO). Probably acts by protecting the N(2) fixation ability of the nitrogenase complex, which is inactivated in the presence of CO. This is N(2)-fixation sustaining protein CowN from Cereibacter sphaeroides (strain ATCC 17025 / ATH 2.4.3) (Rhodobacter sphaeroides).